Reading from the N-terminus, the 233-residue chain is MNHLNKLMERLGHQFNNLELLKIALTHCSSGADNNERLEFLGDSVLGFIIASELYQRRPQAREGDLSRMRASMVNGDELAQMSTKLGINEYLQLGVGEQKSGGKRRRSILADALEAIVGAIYIDAGLETCRRCVLNWYGERVDDLSKLSPKKDAKSLLQEWLQARRLPLPTYEVKITGEAHAQTFTVNCYVKGLPHKTEGVNTTRRRAEQIAAKRFLELLDDGKGDGITERDQ.

An RNase III domain is found at 4–126 (LNKLMERLGH…IVGAIYIDAG (123 aa)). Glutamate 39 is a Mg(2+) binding site. Aspartate 43 is an active-site residue. Mg(2+)-binding residues include aspartate 112 and glutamate 115. Residue glutamate 115 is part of the active site. The DRBM domain occupies 153-222 (DAKSLLQEWL…AKRFLELLDD (70 aa)).

This sequence belongs to the ribonuclease III family. In terms of assembly, homodimer. It depends on Mg(2+) as a cofactor.

The protein localises to the cytoplasm. The enzyme catalyses Endonucleolytic cleavage to 5'-phosphomonoester.. In terms of biological role, digests double-stranded RNA. Involved in the processing of primary rRNA transcript to yield the immediate precursors to the large and small rRNAs (23S and 16S). Processes some mRNAs, and tRNAs when they are encoded in the rRNA operon. Processes pre-crRNA and tracrRNA of type II CRISPR loci if present in the organism. The protein is Ribonuclease 3 of Coxiella burnetii (strain RSA 331 / Henzerling II).